We begin with the raw amino-acid sequence, 220 residues long: MSNANFSILVDFAAGGLVLASVLIVWRRDLRAIVRLLAWQGAALAAIPLLRGIRDNDRALIAVGIAVLALRALVLPWLLARAVGAEAAAQREATPLVNTASSLLITAGLTLTAFAITQPVVNLEPGVTINAVPAAFAVVLIALFVMTTRLHAVSQAAGFLMLDNGIAATAFLLTAGVPLIVELGASLDVLFAVIVIGVLTGRLRRIFGDADLDKLRELRD.

Transmembrane regions (helical) follow at residues 6–26 (FSILVDFAAGGLVLASVLIVW), 33–53 (IVRLLAWQGAALAAIPLLRGI), 59–79 (ALIAVGIAVLALRALVLPWLL), 103–123 (LLITAGLTLTAFAITQPVVNL), 126–146 (GVTINAVPAAFAVVLIALFVM), 157–177 (AGFLMLDNGIAATAFLLTAGV), and 179–199 (LIVELGASLDVLFAVIVIGVL).

It localises to the cell membrane. This is an uncharacterized protein from Mycobacterium tuberculosis (strain ATCC 25618 / H37Rv).